Consider the following 327-residue polypeptide: Undecaprenyl-phosphate 4-deoxy-4-formamido-L-arabinose transferase (327 aa).

Residues 1 to 235 are Cytoplasmic-facing; the sequence is MFDAAPIKKV…TCLTTTPLRL (235 aa). Residues 236-256 traverse the membrane as a helical segment; the sequence is LSLLGSVIAIGGFSLSVLLIV. Residues 257 to 269 are Periplasmic-facing; the sequence is LRLALGPQWAAEG. The helical transmembrane segment at 270-290 threads the bilayer; it reads VFMLFAVLFTFIGAQFIGMGL. Topologically, residues 291–327 are cytoplasmic; sequence LGEYIGRIYNDVRARPRYFVQQVIYPESTPFTEESHQ.

It belongs to the glycosyltransferase 2 family.

The protein resides in the cell inner membrane. The enzyme catalyses UDP-4-deoxy-4-formamido-beta-L-arabinose + di-trans,octa-cis-undecaprenyl phosphate = 4-deoxy-4-formamido-alpha-L-arabinopyranosyl di-trans,octa-cis-undecaprenyl phosphate + UDP. It functions in the pathway glycolipid biosynthesis; 4-amino-4-deoxy-alpha-L-arabinose undecaprenyl phosphate biosynthesis; 4-amino-4-deoxy-alpha-L-arabinose undecaprenyl phosphate from UDP-4-deoxy-4-formamido-beta-L-arabinose and undecaprenyl phosphate: step 1/2. Its pathway is bacterial outer membrane biogenesis; lipopolysaccharide biosynthesis. Its function is as follows. Catalyzes the transfer of 4-deoxy-4-formamido-L-arabinose from UDP to undecaprenyl phosphate. The modified arabinose is attached to lipid A and is required for resistance to polymyxin and cationic antimicrobial peptides. The sequence is that of Undecaprenyl-phosphate 4-deoxy-4-formamido-L-arabinose transferase from Salmonella dublin (strain CT_02021853).